We begin with the raw amino-acid sequence, 460 residues long: Bifunctional protein GlmU (460 aa).

A pyrophosphorylase region spans residues 1–232 (MALNVVILAA…AIEVEGANNR (232 aa)). UDP-N-acetyl-alpha-D-glucosamine is bound by residues 8–11 (LAAG), K22, Q73, 78–79 (GT), 100–102 (YGD), G137, E157, N172, and N230. Residue D102 coordinates Mg(2+). N230 contributes to the Mg(2+) binding site. The tract at residues 233 to 253 (VQLAQLERAYQAREAEKLMLA) is linker. Residues 254-460 (GANLRDPSRI…GWQRPVKIKK (207 aa)) form an N-acetyltransferase region. Positions 336 and 354 each coordinate UDP-N-acetyl-alpha-D-glucosamine. H366 acts as the Proton acceptor in catalysis. Residues Y369 and N380 each coordinate UDP-N-acetyl-alpha-D-glucosamine. Residues A383, 389-390 (NY), S408, A426, and R443 each bind acetyl-CoA.

This sequence in the N-terminal section; belongs to the N-acetylglucosamine-1-phosphate uridyltransferase family. It in the C-terminal section; belongs to the transferase hexapeptide repeat family. In terms of assembly, homotrimer. Mg(2+) is required as a cofactor.

It localises to the cytoplasm. It carries out the reaction alpha-D-glucosamine 1-phosphate + acetyl-CoA = N-acetyl-alpha-D-glucosamine 1-phosphate + CoA + H(+). The enzyme catalyses N-acetyl-alpha-D-glucosamine 1-phosphate + UTP + H(+) = UDP-N-acetyl-alpha-D-glucosamine + diphosphate. It participates in nucleotide-sugar biosynthesis; UDP-N-acetyl-alpha-D-glucosamine biosynthesis; N-acetyl-alpha-D-glucosamine 1-phosphate from alpha-D-glucosamine 6-phosphate (route II): step 2/2. Its pathway is nucleotide-sugar biosynthesis; UDP-N-acetyl-alpha-D-glucosamine biosynthesis; UDP-N-acetyl-alpha-D-glucosamine from N-acetyl-alpha-D-glucosamine 1-phosphate: step 1/1. The protein operates within bacterial outer membrane biogenesis; LPS lipid A biosynthesis. Functionally, catalyzes the last two sequential reactions in the de novo biosynthetic pathway for UDP-N-acetylglucosamine (UDP-GlcNAc). The C-terminal domain catalyzes the transfer of acetyl group from acetyl coenzyme A to glucosamine-1-phosphate (GlcN-1-P) to produce N-acetylglucosamine-1-phosphate (GlcNAc-1-P), which is converted into UDP-GlcNAc by the transfer of uridine 5-monophosphate (from uridine 5-triphosphate), a reaction catalyzed by the N-terminal domain. The sequence is that of Bifunctional protein GlmU from Shewanella baltica (strain OS155 / ATCC BAA-1091).